The sequence spans 454 residues: Glutamine synthetase (454 aa).

Positions 25–111 constitute a GS beta-grasp domain; it reads QGIDFLRLQF…LICDVVDREG (87 aa). Residues 118 to 454 enclose the GS catalytic domain; sequence PRQVLKNVLA…WETDRYLEKF (337 aa). Mg(2+) contacts are provided by Glu-141 and Glu-143. Residue Glu-193 coordinates ATP. Glu-198 and Glu-205 together coordinate Mg(2+). Residues 249–250 and Gly-250 each bind L-glutamate; that span reads NG. His-254 lines the Mg(2+) pocket. Residues 256-258 and Ser-258 contribute to the ATP site; that span reads HIS. Residues Arg-308, Glu-314, and Arg-326 each coordinate L-glutamate. ATP is bound by residues Arg-326 and Arg-331. Glu-343 provides a ligand contact to Mg(2+). Arg-345 is a binding site for L-glutamate.

It belongs to the glutamine synthetase family. In terms of assembly, oligomer of 12 subunits arranged in the form of two hexagons. In its feedback-inhibited form, interacts with TnrA in order to block its DNA-binding activity. Mg(2+) is required as a cofactor.

Its subcellular location is the cytoplasm. It catalyses the reaction L-glutamate + NH4(+) + ATP = L-glutamine + ADP + phosphate + H(+). Its activity is regulated as follows. Inhibited by glutamine. Its function is as follows. Glutamine synthetase (GS) is an unusual multitasking protein that functions as an enzyme, a transcription coregulator, and a chaperone in ammonium assimilation and in the regulation of genes involved in nitrogen metabolism. It catalyzes the ATP-dependent biosynthesis of glutamine from glutamate and ammonia. Feedback-inhibited GlnA also interacts with and regulates the activity of the transcriptional regulator TnrA. During nitrogen limitation, TnrA is in its DNA-binding active state and turns on the transcription of genes required for nitrogen assimilation. Under conditions of nitrogen excess, feedback-inhibited GlnA forms a stable complex with TnrA, which inhibits its DNA-binding activity. In contrast, feedback-inhibited GlnA acts as a chaperone to stabilize the DNA-binding activity of GlnR, which represses the transcription of nitrogen assimilation genes. The polypeptide is Glutamine synthetase (Halobacterium salinarum (strain ATCC 700922 / JCM 11081 / NRC-1) (Halobacterium halobium)).